The following is a 104-amino-acid chain: Replication restart protein PriB (104 aa).

The SSB domain occupies 2–101; that stretch reads TNRLVLSGTV…LHAEQIELID (100 aa). Cys-48 and Cys-80 are joined by a disulfide. The short motif at 82–89 is the L45 loop element; the sequence is KAKNGLSK.

It belongs to the PriB family. In terms of assembly, homodimer. Primosome assembly occurs via a 'hand-off' mechanism. PriA binds to replication forks, subsequently PriB then DnaT bind; DnaT then displaces ssDNA to generate the helicase loading substrate, which allows DnaC to load helicase DnaB onto the fork. ssDNA is displaced from the PriB-ssDNA complex by DnaT. In a PriA-PriB-replication fork structure, movement of the PriA CRR domain exposes a surface to which PriB binds and contacts ssDNA emerging from the PriA pore. Binds PriA; binding is improved in the presence of ssDNA. Weakly binds DnaT; binding is improved in the presence of ssDNA; as DnaT levels increase PriB dissociates from ssDNA. Component of the replication restart primosome, which is composed of PriA, PriB, PriC, DnaB and DnaT; DnaG primase associates transiently with this complex. Component of the preprimosomal complex composed of one monomer of PriC and DnaT, two monomers of PriA, two dimers of PriB and one hexamer of DnaB. An intersubunit disulfide bond is seen in some crystals.

Its function is as follows. Involved in the restart of stalled replication forks, which reloads the replicative helicase (DnaB) on sites other than the origin of replication; the PriA-PriB pathway is the major replication restart pathway. There are several restart pathways, the PriA-PriB pathway is subdivided into 2 distinct pathways. priB and priC have redundant roles in the cell. During primosome assembly it facilitates complex formation between PriA and DnaT on DNA; stabilizes PriA on DNA, presumably by preventing or inhibiting PriA DNA translocation activity. Forms a branched DNA-PriA-PriB complex when the lagging strand is single-stranded (ss)DNA. Binds ssDNA in the presence and absence of ssDNA DNA-binding protein (SSB), does not bind branched structures. DNA binding, forming spiral filaments on ssDNA, is cooperative. Stimulates the helicase activity of PriA. The homodimer binds 12 nucleotides of ssDNA. Binds homo-pyrimidine tracts better than homo-purine tracts. Genetic interactions among priB, dam, lexA, nagC, polA, rdgB, rdgB, rep and uup link the PriA-PriB replication restart pathway to DNA double-strand break repair. This chain is Replication restart protein PriB, found in Escherichia coli (strain K12).